The primary structure comprises 427 residues: 3-phosphoshikimate 1-carboxyvinyltransferase (427 aa).

Residues Lys-20, Ser-21, and Arg-25 each coordinate 3-phosphoshikimate. Position 20 (Lys-20) interacts with phosphoenolpyruvate. 2 residues coordinate phosphoenolpyruvate: Gly-92 and Arg-120. Residues Ser-166, Gln-168, Asp-312, and Lys-339 each contribute to the 3-phosphoshikimate site. Residue Gln-168 participates in phosphoenolpyruvate binding. Asp-312 acts as the Proton acceptor in catalysis. Phosphoenolpyruvate-binding residues include Arg-343 and Arg-385.

This sequence belongs to the EPSP synthase family. As to quaternary structure, monomer.

The protein localises to the cytoplasm. It catalyses the reaction 3-phosphoshikimate + phosphoenolpyruvate = 5-O-(1-carboxyvinyl)-3-phosphoshikimate + phosphate. It participates in metabolic intermediate biosynthesis; chorismate biosynthesis; chorismate from D-erythrose 4-phosphate and phosphoenolpyruvate: step 6/7. Catalyzes the transfer of the enolpyruvyl moiety of phosphoenolpyruvate (PEP) to the 5-hydroxyl of shikimate-3-phosphate (S3P) to produce enolpyruvyl shikimate-3-phosphate and inorganic phosphate. The sequence is that of 3-phosphoshikimate 1-carboxyvinyltransferase from Streptococcus agalactiae serotype III (strain NEM316).